Reading from the N-terminus, the 1129-residue chain is Translation initiation factor IF-2 (1129 aa).

Low complexity-rich tracts occupy residues 33–42 and 56–99; these read AARSHSSSIS and GGSP…AAKP. Disordered stretches follow at residues 33–462 and 485–515; these read AARS…IGEN and SLARPSKPRTKHKPAPKPVAAIRKRRKETAR. Residues 100 to 112 are compositionally biased toward pro residues; it reads SPKPSAPSRPEAP. Residues 135–147 are compositionally biased toward low complexity; that stretch reads STPAAAAPAAAPS. The segment covering 148-161 has biased composition (pro residues); it reads APAPSAPTPRPKPT. Low complexity predominate over residues 162-175; that stretch reads APKASAPAPTASAP. Pro residues-rich tracts occupy residues 176-191 and 211-221; these read SAPPRPTSARPTPAPA and PTAPPTRPQPK. The span at 257 to 273 shows a compositional bias: low complexity; the sequence is GQRPGVSPRPSGPPGQR. The span at 431–445 shows a compositional bias: basic and acidic residues; it reads GRPDWDDSAKLEALR. Composition is skewed to basic residues over residues 490 to 499 and 506 to 515; these read SKPRTKHKPA and IRKRRKETAR. One can recognise a tr-type G domain in the interval 621 to 793; it reads RRPPVVTVMG…ILLVTEVEDL (173 aa). A G1 region spans residues 630 to 637; that stretch reads GHVDHGKT. 630 to 637 contributes to the GTP binding site; that stretch reads GHVDHGKT. Residues 655–659 form a G2 region; sequence GITQH. Positions 680-683 are G3; that stretch reads DTPG. GTP is bound by residues 680–684 and 734–737; these read DTPGH and NKID. The G4 stretch occupies residues 734 to 737; it reads NKID. The G5 stretch occupies residues 770–772; it reads SAL.

It belongs to the TRAFAC class translation factor GTPase superfamily. Classic translation factor GTPase family. IF-2 subfamily.

It localises to the cytoplasm. Functionally, one of the essential components for the initiation of protein synthesis. Protects formylmethionyl-tRNA from spontaneous hydrolysis and promotes its binding to the 30S ribosomal subunits. Also involved in the hydrolysis of GTP during the formation of the 70S ribosomal complex. The polypeptide is Translation initiation factor IF-2 (Synechococcus sp. (strain CC9311)).